A 445-amino-acid chain; its full sequence is GTPase Obg (445 aa).

Residues 7–164 form the Obg domain; sequence PEFVDCVTVE…RKLRLEVKSI (158 aa). The region spanning 165-342 is the OBG-type G domain; the sequence is ADVALVGFPS…FTLRLGEICQ (178 aa). Residues 171–178, 196–200, 217–220, 291–294, and 323–325 each bind GTP; these read GFPSVGKS, FTTLH, DVPG, NKID, and SAV. Residues Ser-178 and Thr-198 each coordinate Mg(2+). The OCT domain occupies 357–434; sequence IPAKNTPEFS…IGGVIFTWDP (78 aa).

Belongs to the TRAFAC class OBG-HflX-like GTPase superfamily. OBG GTPase family. As to quaternary structure, monomer. Mg(2+) serves as cofactor.

It localises to the cytoplasm. In terms of biological role, an essential GTPase which binds GTP, GDP and possibly (p)ppGpp with moderate affinity, with high nucleotide exchange rates and a fairly low GTP hydrolysis rate. Plays a role in control of the cell cycle, stress response, ribosome biogenesis and in those bacteria that undergo differentiation, in morphogenesis control. The chain is GTPase Obg from Tropheryma whipplei (strain Twist) (Whipple's bacillus).